The following is a 269-amino-acid chain: Homocitrate synthase subunit alpha (269 aa).

The 253-residue stretch at 3–255 (INIVDTTLRD…IYTGDFEDII (253 aa)) folds into the Pyruvate carboxyltransferase domain.

This sequence belongs to the alpha-IPM synthase/homocitrate synthase family. As to quaternary structure, heterodimer of an alpha and an omega chain.

The catalysed reaction is acetyl-CoA + 2-oxoglutarate + H2O = (2R)-homocitrate + CoA + H(+). Functionally, this protein is a Fe-Mo-cofactor biosynthetic component. The protein is Homocitrate synthase subunit alpha (nifV-ALPHA) of Clostridium pasteurianum.